Consider the following 558-residue polypeptide: Trehalase 1 (558 aa).

The protein belongs to the glycosyl hydrolase 15 family.

It carries out the reaction alpha,alpha-trehalose + H2O = alpha-D-glucose + beta-D-glucose. The protein operates within glycan degradation; trehalose degradation; D-glucose from alpha,alpha-trehalose: step 1/1. Its function is as follows. Catalyzes the hydrolysis of alpha,alpha-trehalose into two molecules of D-glucose. This Sulfolobus acidocaldarius (strain ATCC 33909 / DSM 639 / JCM 8929 / NBRC 15157 / NCIMB 11770) protein is Trehalase 1 (treH1).